The following is a 464-amino-acid chain: 3-isopropylmalate dehydratase large subunit (464 aa).

Residues cysteine 345, cysteine 405, and cysteine 408 each coordinate [4Fe-4S] cluster.

Belongs to the aconitase/IPM isomerase family. LeuC type 1 subfamily. In terms of assembly, heterodimer of LeuC and LeuD. [4Fe-4S] cluster serves as cofactor.

The catalysed reaction is (2R,3S)-3-isopropylmalate = (2S)-2-isopropylmalate. The protein operates within amino-acid biosynthesis; L-leucine biosynthesis; L-leucine from 3-methyl-2-oxobutanoate: step 2/4. In terms of biological role, catalyzes the isomerization between 2-isopropylmalate and 3-isopropylmalate, via the formation of 2-isopropylmaleate. The polypeptide is 3-isopropylmalate dehydratase large subunit (Bacteroides fragilis (strain ATCC 25285 / DSM 2151 / CCUG 4856 / JCM 11019 / LMG 10263 / NCTC 9343 / Onslow / VPI 2553 / EN-2)).